Consider the following 291-residue polypeptide: Protease HtpX (291 aa).

Transmembrane regions (helical) follow at residues 4–24 and 36–56; these read ILLF…TLKL and GSLL…SLFI. His-142 is a binding site for Zn(2+). Glu-143 is a catalytic residue. Zn(2+) is bound at residue His-146. Transmembrane regions (helical) follow at residues 150-170 and 193-213; these read GDMV…MFFA and FVAT…IVMW. Glu-219 is a binding site for Zn(2+).

It belongs to the peptidase M48B family. Requires Zn(2+) as cofactor.

Its subcellular location is the cell inner membrane. The sequence is that of Protease HtpX from Pseudomonas aeruginosa (strain LESB58).